The primary structure comprises 485 residues: MASISAASATATASTKLAYPYSPSSSSSSSNTAAVFPSNSSKLILSSSFTPTPSTLFLHSPTTTPSTTHPRRFTVRAARGKFERKKPHVNIGTIGHVDHGKTTLTAALTMALASMGNSAPKKYDEIDAAPEERARGITINTATVEYETENRHYAHVDCPGHADYVKNMITGAAQMDGAILVVSGADGPMPQTKEHILLAKQVGVPNMVVFLNKQDQVDDEELLELVELEVRELLSSYEFPGDEIPIISGSALLALEALMANPSIKRGENQWVDKIYQLMDNVDEYIPIPQRQTELPFLMAIEDVFSITGRGTVATGRVERGTVKVGEIVDIVGLKDTRNTTVTGVEMFQKILDEAMAGDNVGLLLRGIQKIDIQRGMVLAKPGTITPHTKFEALVYVLKKEEGGRHSPFFAGYRPQFYMRTTDVTGKVTVIMSDKGEESKMVMPGDRVNMVVELIMPVACEQGMRFAIREGGKTVGAGVIQKILE.

Residues 1–76 (MASISAASAT…TTHPRRFTVR (76 aa)) constitute a chloroplast transit peptide. One can recognise a tr-type G domain in the interval 86–290 (KPHVNIGTIG…NVDEYIPIPQ (205 aa)). The interval 95–102 (GHVDHGKT) is G1. 95 to 102 (GHVDHGKT) serves as a coordination point for GTP. The segment at 136-140 (GITIN) is G2. A G3 region spans residues 157 to 160 (DCPG). GTP-binding positions include 157 to 161 (DCPGH) and 212 to 215 (NKQD). The segment at 212-215 (NKQD) is G4. The G5 stretch occupies residues 250–252 (SAL).

This sequence belongs to the TRAFAC class translation factor GTPase superfamily. Classic translation factor GTPase family. EF-Tu/EF-1A subfamily.

It is found in the plastid. The protein resides in the chloroplast. Functionally, this protein promotes the GTP-dependent binding of aminoacyl-tRNA to the A-site of ribosomes during protein biosynthesis. In Nicotiana sylvestris (Wood tobacco), this protein is Elongation factor TuB, chloroplastic (TUFB).